The primary structure comprises 250 residues: Ubiquinone/menaquinone biosynthesis C-methyltransferase UbiE (250 aa).

S-adenosyl-L-methionine contacts are provided by residues Thr-73, Asp-94, and 122 to 123; that span reads DA.

The protein belongs to the class I-like SAM-binding methyltransferase superfamily. MenG/UbiE family.

The catalysed reaction is a 2-demethylmenaquinol + S-adenosyl-L-methionine = a menaquinol + S-adenosyl-L-homocysteine + H(+). It catalyses the reaction a 2-methoxy-6-(all-trans-polyprenyl)benzene-1,4-diol + S-adenosyl-L-methionine = a 5-methoxy-2-methyl-3-(all-trans-polyprenyl)benzene-1,4-diol + S-adenosyl-L-homocysteine + H(+). It participates in quinol/quinone metabolism; menaquinone biosynthesis; menaquinol from 1,4-dihydroxy-2-naphthoate: step 2/2. Its pathway is cofactor biosynthesis; ubiquinone biosynthesis. In terms of biological role, methyltransferase required for the conversion of demethylmenaquinol (DMKH2) to menaquinol (MKH2) and the conversion of 2-polyprenyl-6-methoxy-1,4-benzoquinol (DDMQH2) to 2-polyprenyl-3-methyl-6-methoxy-1,4-benzoquinol (DMQH2). The chain is Ubiquinone/menaquinone biosynthesis C-methyltransferase UbiE from Coxiella burnetii (strain RSA 331 / Henzerling II).